Here is a 545-residue protein sequence, read N- to C-terminus: 1,3-beta-glucanosyltransferase ARB_07487 (545 aa).

The N-terminal stretch at 1–19 (MKFSSLAAATALVAGSVVA) is a signal peptide. Residues Asn-51 and Asn-69 are each glycosylated (N-linked (GlcNAc...) asparagine). Cys-88 and Cys-117 form a disulfide bridge. (1,3-beta-D-glucosyl)n is bound by residues Tyr-106, 133–141 (SEPSTSIIR), Asn-174, and Glu-175. Glu-175 functions as the Proton donor in the catalytic mechanism. Asn-179 is a glycosylation site (N-linked (GlcNAc...) asparagine). Residues Asp-216 and Arg-221 each coordinate (1,3-beta-D-glucosyl)n. Intrachain disulfides connect Cys-230–Cys-363, Cys-248–Cys-279, Cys-384–Cys-437, Cys-393–Cys-464, and Cys-412–Cys-419. Glu-276 serves as the catalytic Nucleophile. Tyr-308 provides a ligand contact to (1,3-beta-D-glucosyl)n. The segment at 493–513 (GTGSVTSAPGSGGNKPDQGAA) is disordered. A lipid anchor (GPI-anchor amidated alanine) is attached at Ala-512. Positions 513–545 (ASTISAPSVNLGIVKLGAYIFCAVLAGAGMILI) are cleaved as a propeptide — removed in mature form.

The protein belongs to the glycosyl hydrolase 72 family. In terms of processing, the GPI-anchor is attached to the protein in the endoplasmic reticulum and serves to target the protein to the cell surface. There, the glucosamine-inositol phospholipid moiety is cleaved off and the GPI-modified mannoprotein is covalently attached via its lipidless GPI glycan remnant to the 1,6-beta-glucan of the outer cell wall layer.

It localises to the secreted. Its subcellular location is the cell membrane. The protein localises to the cell wall. Splits internally a 1,3-beta-glucan molecule and transfers the newly generated reducing end (the donor) to the non-reducing end of another 1,3-beta-glucan molecule (the acceptor) forming a 1,3-beta linkage, resulting in the elongation of 1,3-beta-glucan chains in the cell wall. Involved in cell wall biosynthesis and morphogenesis. The chain is 1,3-beta-glucanosyltransferase ARB_07487 from Arthroderma benhamiae (strain ATCC MYA-4681 / CBS 112371) (Trichophyton mentagrophytes).